Consider the following 1258-residue polypeptide: Non-secreted LysM effector LysM19 (1258 aa).

The interval 148–168 (VTQSLPNISSHEKRDDHEGNS) is disordered. A compositionally biased stretch (basic and acidic residues) spans 157-168 (SHEKRDDHEGNS). LysM domains lie at 1028 to 1073 (IVYT…SICL) and 1179 to 1227 (RWHV…AYCT).

The protein belongs to the secreted LysM effector family.

Its function is as follows. Non-secreted LysM effector that might be involved in manipulation of host defenses for successful infection. The protein is Non-secreted LysM effector LysM19 of Penicillium expansum (Blue mold rot fungus).